The following is a 78-amino-acid chain: Large ribosomal subunit protein bL28 (78 aa).

The disordered stretch occupies residues 1–23 (MSRICQITGKKPLSGNKRSHSMN).

It belongs to the bacterial ribosomal protein bL28 family.

The protein is Large ribosomal subunit protein bL28 of Wigglesworthia glossinidia brevipalpis.